Reading from the N-terminus, the 132-residue chain is Histone H2B.2 (132 aa).

Positions 1–19 (MAPKAEKKPASKAPAEKKP) are enriched in basic and acidic residues. The tract at residues 1–39 (MAPKAEKKPASKAPAEKKPAAKKTSSSVDPSKKRTKARK) is disordered. N6-acetyllysine; alternate occurs at positions 7 and 8. Residues lysine 7 and lysine 8 each participate in a glycyl lysine isopeptide (Lys-Gly) (interchain with G-Cter in SUMO); alternate cross-link. Residue serine 11 is modified to Phosphoserine. At lysine 12 the chain carries N6-acetyllysine. At lysine 17 the chain carries N6-acetyllysine; alternate. Residue lysine 17 forms a Glycyl lysine isopeptide (Lys-Gly) (interchain with G-Cter in SUMO); alternate linkage. A Glycyl lysine isopeptide (Lys-Gly) (interchain with G-Cter in SUMO) cross-link involves residue lysine 18. Lysine 125 is covalently cross-linked (Glycyl lysine isopeptide (Lys-Gly) (interchain with G-Cter in ubiquitin)).

Belongs to the histone H2B family. In terms of assembly, the nucleosome is a histone octamer containing two molecules each of H2A, H2B, H3 and H4 assembled in one H3-H4 heterotetramer and two H2A-H2B heterodimers. The octamer wraps approximately 147 bp of DNA. Post-translationally, monoubiquitinated by the UBC2-BRE1 complex to form H2BK123ub1. H2BK123ub1 gives a specific tag for epigenetic transcriptional activation and is also prerequisite for H3K4me and H3K79me formation. H2BK123ub1 also modulates the formation of double-strand breaks during meiosis and is a prerequisite for DNA-damage checkpoint activation. Phosphorylated by STE20 to form H2BS10ph during progression through meiotic prophase. May be correlated with chromosome condensation. In terms of processing, acetylated by GCN5 to form H2BK11ac and H2BK16ac. H2BK16ac can also be formed by ESA1. Acetylation of N-terminal lysines and particularly formation of H2BK11acK16ac has a positive effect on transcription. Post-translationally, sumoylation to form H2BK6su or H2BK7su, and probably also H2BK16su or H2BK17su, occurs preferentially near the telomeres and represses gene transcription.

The protein localises to the nucleus. The protein resides in the chromosome. Core component of nucleosome. Nucleosomes wrap and compact DNA into chromatin, limiting DNA accessibility to the cellular machineries which require DNA as a template. Histones thereby play a central role in transcription regulation, DNA repair, DNA replication and chromosomal stability. DNA accessibility is regulated via a complex set of post-translational modifications of histones, also called histone code, and nucleosome remodeling. In Kluyveromyces lactis (strain ATCC 8585 / CBS 2359 / DSM 70799 / NBRC 1267 / NRRL Y-1140 / WM37) (Yeast), this protein is Histone H2B.2 (HTB1).